The sequence spans 100 residues: Urease subunit gamma (100 aa).

Belongs to the urease gamma subunit family. In terms of assembly, heterotrimer of UreA (gamma), UreB (beta) and UreC (alpha) subunits. Three heterotrimers associate to form the active enzyme.

It is found in the cytoplasm. The catalysed reaction is urea + 2 H2O + H(+) = hydrogencarbonate + 2 NH4(+). It participates in nitrogen metabolism; urea degradation; CO(2) and NH(3) from urea (urease route): step 1/1. The chain is Urease subunit gamma from Rhizobium leguminosarum bv. viciae.